The sequence spans 468 residues: Heparan-sulfate 6-O-sulfotransferase 2 (468 aa).

The Cytoplasmic portion of the chain corresponds to 1–9 (MDGKSNYSR). Residues 10 to 30 (LLIALLMILFFGGIVLQYICS) form a helical; Signal-anchor for type II membrane protein membrane-spanning segment. Topologically, residues 31 to 468 (TSDWQLLHLA…DYLENVEQWR (438 aa)) are lumenal. Asn-79 carries an N-linked (GlcNAc...) asparagine glycan. 103–111 (HIQKTGGTT) serves as a coordination point for 3'-phosphoadenylyl sulfate. Residues 133-134 (KK), Arg-150, Trp-155, and His-160 contribute to the substrate site. His-160 (proton acceptor) is an active-site residue. Positions 197 and 205 each coordinate 3'-phosphoadenylyl sulfate. Residues His-209 and Trp-216 each contribute to the substrate site. Asn-276 carries an N-linked (GlcNAc...) asparagine glycan. Position 329 to 331 (329 to 331 (TQL)) interacts with 3'-phosphoadenylyl sulfate. N-linked (GlcNAc...) asparagine glycosylation is present at Asn-332. 335 to 336 (RA) serves as a coordination point for 3'-phosphoadenylyl sulfate. The segment at 409 to 447 (FKPTKEPPMTEQSPAFAEEKQADAERTLESETEGQVEEN) is disordered. Residues 425–437 (AEEKQADAERTLE) are compositionally biased toward basic and acidic residues. Positions 438–447 (SETEGQVEEN) are enriched in acidic residues.

It belongs to the sulfotransferase 6 family. In terms of tissue distribution, expressed ubiquitously during gastrulation. During early somitogenesis, strong expression in head and presumptive brain. During mid-somitogenesis, strong expression in eye, hindbrain and somitic boundaries and weak expression in tail bud. During late somitogenesis, strong expression in eye, hindbrain, branchial arch primordia, spinal cord and ventral medial somites. At 24 hours post-fertilization (hpf), strong expression throughout the head, with expression receeding from the trunk spinal cord, ventral medial somites and somitic boundaries; expressed in cells surrounding vascular structures of the dorsal aorta and caudal vein in the tail. At 36 hpf, expressed in lens, optic stalk, hindbrain and pectoral fin. At 48 hpf, expressed in eye, brain, otic vesicle and branchial arches.

The protein resides in the membrane. It carries out the reaction alpha-D-glucosaminyl-[heparan sulfate](n) + 3'-phosphoadenylyl sulfate = 6-sulfo-alpha-D-glucosaminyl-[heparan sulfate](n) + adenosine 3',5'-bisphosphate + H(+). In terms of biological role, 6-O-sulfation enzyme which catalyzes the transfer of sulfate from 3'-phosphoadenosine 5'-phosphosulfate (PAPS) to position 6 of the N-sulfoglucosamine residue (GlcNS) of heparan sulfate. Required for muscle development and angiogenesis. This Danio rerio (Zebrafish) protein is Heparan-sulfate 6-O-sulfotransferase 2 (hs6st2).